A 1691-amino-acid polypeptide reads, in one-letter code: Protein TIC 214 (1691 aa).

Helical transmembrane passes span 19–39 (MLLG…SQIL), 60–80 (VLAQ…LLLL), 84–104 (LLTI…KDFP), 123–143 (LFLI…NSVL), 158–178 (TVFM…FNFF), and 200–220 (FIYA…LGRA). Residues 819 to 839 (EKQHTLQRKHKEIGSKSRELK) form a disordered region.

The protein belongs to the TIC214 family. Part of the Tic complex.

Its subcellular location is the plastid. The protein resides in the chloroplast inner membrane. In terms of biological role, involved in protein precursor import into chloroplasts. May be part of an intermediate translocation complex acting as a protein-conducting channel at the inner envelope. In Adiantum capillus-veneris (Maidenhair fern), this protein is Protein TIC 214.